We begin with the raw amino-acid sequence, 116 residues long: Fluoride-specific ion channel FluC 2 (116 aa).

2 helical membrane passes run 3-23 and 43-63; these read LLTA…RYAV and LLFG…AVTV. G67 and T70 together coordinate Na(+). The chain crosses the membrane as a helical span at residues 96–116; that stretch reads VGTLAAALLAVFLGIALGAAL.

Belongs to the fluoride channel Fluc/FEX (TC 1.A.43) family.

The protein localises to the cell membrane. It carries out the reaction fluoride(in) = fluoride(out). Its activity is regulated as follows. Na(+) is not transported, but it plays an essential structural role and its presence is essential for fluoride channel function. Fluoride-specific ion channel. Important for reducing fluoride concentration in the cell, thus reducing its toxicity. The polypeptide is Fluoride-specific ion channel FluC 2 (Natronomonas pharaonis (strain ATCC 35678 / DSM 2160 / CIP 103997 / JCM 8858 / NBRC 14720 / NCIMB 2260 / Gabara) (Halobacterium pharaonis)).